Here is a 274-residue protein sequence, read N- to C-terminus: Urease accessory protein UreD (274 aa).

The protein belongs to the UreD family. As to quaternary structure, ureD, UreF and UreG form a complex that acts as a GTP-hydrolysis-dependent molecular chaperone, activating the urease apoprotein by helping to assemble the nickel containing metallocenter of UreC. The UreE protein probably delivers the nickel.

The protein resides in the cytoplasm. Required for maturation of urease via the functional incorporation of the urease nickel metallocenter. The protein is Urease accessory protein UreD of Lachnoclostridium phytofermentans (strain ATCC 700394 / DSM 18823 / ISDg) (Clostridium phytofermentans).